The sequence spans 348 residues: 4-hydroxy-2-oxovalerate aldolase (348 aa).

A Pyruvate carboxyltransferase domain is found at 9–261; the sequence is ITVHDMTLRD…RTGVDVWKIQ (253 aa). 17-18 serves as a coordination point for substrate; sequence RD. Aspartate 18 is a binding site for Mn(2+). The active-site Proton acceptor is the histidine 21. 2 residues coordinate substrate: serine 171 and histidine 200. The Mn(2+) site is built by histidine 200 and histidine 202. Tyrosine 291 provides a ligand contact to substrate.

It belongs to the 4-hydroxy-2-oxovalerate aldolase family.

The catalysed reaction is (S)-4-hydroxy-2-oxopentanoate = acetaldehyde + pyruvate. In Ralstonia pickettii (strain 12J), this protein is 4-hydroxy-2-oxovalerate aldolase.